The primary structure comprises 389 residues: Nicotinate phosphoribosyltransferase (389 aa).

Phosphohistidine; by autocatalysis is present on His216.

The protein belongs to the NAPRTase family. Transiently phosphorylated on a His residue during the reaction cycle. Phosphorylation strongly increases the affinity for substrates and increases the rate of nicotinate D-ribonucleotide production. Dephosphorylation regenerates the low-affinity form of the enzyme, leading to product release.

The enzyme catalyses nicotinate + 5-phospho-alpha-D-ribose 1-diphosphate + ATP + H2O = nicotinate beta-D-ribonucleotide + ADP + phosphate + diphosphate. It functions in the pathway cofactor biosynthesis; NAD(+) biosynthesis; nicotinate D-ribonucleotide from nicotinate: step 1/1. Functionally, catalyzes the synthesis of beta-nicotinate D-ribonucleotide from nicotinate and 5-phospho-D-ribose 1-phosphate at the expense of ATP. The protein is Nicotinate phosphoribosyltransferase of Ralstonia nicotianae (strain ATCC BAA-1114 / GMI1000) (Ralstonia solanacearum).